A 349-amino-acid polypeptide reads, in one-letter code: Ureidoglycolate dehydrogenase (NAD(+)) (349 aa).

His116 acts as the Proton acceptor in catalysis. NAD(+) is bound by residues Ser140, 174–176, Lys224, and 306–308; these read DMA and GQD.

This sequence belongs to the LDH2/MDH2 oxidoreductase family. In terms of assembly, homodimer.

Its subcellular location is the cytoplasm. It catalyses the reaction (S)-ureidoglycolate + NAD(+) = N-carbamoyl-2-oxoglycine + NADH + H(+). The protein operates within nitrogen metabolism; (S)-allantoin degradation; oxalurate from (S)-ureidoglycolate: step 1/1. In terms of biological role, allD plays a pivotal role as a metabolic branch-point enzyme in nitrogen utilization via the assimilation of allantoin. It is able to utilize allantoin as a sole source of nitrogen under anaerobic conditions. Catalyzes the oxidation of ureidoglycolate to oxalurate. The chain is Ureidoglycolate dehydrogenase (NAD(+)) from Escherichia coli (strain K12).